The primary structure comprises 308 residues: Alternaria stem canker resistance protein 1 (308 aa).

The next 6 helical transmembrane spans lie at 21–41, 82–102, 128–148, 165–185, 213–233, and 254–274; these read YQDL…RFIL, FVYF…EPWF, LLYM…LYWE, VSLI…VVLA, FSLF…FWII, and IILY…HLFW. The TLC domain occupies 73–287; that stretch reads NKFKESAWKF…ILRMVKNQIL (215 aa).

Its subcellular location is the endoplasmic reticulum membrane. Its function is as follows. Mediates resistance to sphinganine-analog mycotoxins (SAMs) by restoring the sphingolipid biosynthesis. Could salvage the transport of GPI-anchored proteins from the endoplasmic reticulum to the Golgi apparatus in ceramides-depleted cells after SAM exposure. The sequence is that of Alternaria stem canker resistance protein 1 from Solanum lycopersicum (Tomato).